The primary structure comprises 168 residues: Putative postmeiotic segregation increased 2-like protein 3 (168 aa).

The region spanning Val8 to Pro84 is the KRAB domain.

Belongs to the DNA mismatch repair MutL/HexB family.

In Homo sapiens (Human), this protein is Putative postmeiotic segregation increased 2-like protein 3 (PMS2P3).